The chain runs to 113 residues: Large ribosomal subunit protein bL19 (113 aa).

It belongs to the bacterial ribosomal protein bL19 family.

This protein is located at the 30S-50S ribosomal subunit interface and may play a role in the structure and function of the aminoacyl-tRNA binding site. This chain is Large ribosomal subunit protein bL19, found in Rhodococcus erythropolis (strain PR4 / NBRC 100887).